Reading from the N-terminus, the 319-residue chain is Cytochrome c biogenesis protein CcsA (319 aa).

Transmembrane regions (helical) follow at residues 9–29 (ILTH…LISL), 48–68 (TFFC…HFPL), 71–91 (LYES…VPYF), 98–118 (LSTI…SGLL), 143–163 (MILG…LLVI), 225–245 (IISL…VWAN), 258–275 (ETWA…LHTR), and 286–306 (AIVA…VNLL).

Belongs to the CcmF/CycK/Ccl1/NrfE/CcsA family. May interact with Ccs1.

It is found in the plastid. The protein localises to the chloroplast thylakoid membrane. Required during biogenesis of c-type cytochromes (cytochrome c6 and cytochrome f) at the step of heme attachment. The polypeptide is Cytochrome c biogenesis protein CcsA (Eucalyptus globulus subsp. globulus (Tasmanian blue gum)).